A 317-amino-acid polypeptide reads, in one-letter code: 4-hydroxy-3-methylbut-2-enyl diphosphate reductase (317 aa).

A [4Fe-4S] cluster-binding site is contributed by C12. Residues H43 and H81 each coordinate (2E)-4-hydroxy-3-methylbut-2-enyl diphosphate. Dimethylallyl diphosphate is bound by residues H43 and H81. The isopentenyl diphosphate site is built by H43 and H81. C103 serves as a coordination point for [4Fe-4S] cluster. Residue H131 participates in (2E)-4-hydroxy-3-methylbut-2-enyl diphosphate binding. Position 131 (H131) interacts with dimethylallyl diphosphate. Isopentenyl diphosphate is bound at residue H131. Residue E133 is the Proton donor of the active site. T172 lines the (2E)-4-hydroxy-3-methylbut-2-enyl diphosphate pocket. Residue C200 participates in [4Fe-4S] cluster binding. (2E)-4-hydroxy-3-methylbut-2-enyl diphosphate-binding residues include S228, N230, and S273. Dimethylallyl diphosphate-binding residues include S228, N230, and S273. Isopentenyl diphosphate is bound by residues S228, N230, and S273.

It belongs to the IspH family. [4Fe-4S] cluster is required as a cofactor.

The enzyme catalyses isopentenyl diphosphate + 2 oxidized [2Fe-2S]-[ferredoxin] + H2O = (2E)-4-hydroxy-3-methylbut-2-enyl diphosphate + 2 reduced [2Fe-2S]-[ferredoxin] + 2 H(+). It catalyses the reaction dimethylallyl diphosphate + 2 oxidized [2Fe-2S]-[ferredoxin] + H2O = (2E)-4-hydroxy-3-methylbut-2-enyl diphosphate + 2 reduced [2Fe-2S]-[ferredoxin] + 2 H(+). Its pathway is isoprenoid biosynthesis; dimethylallyl diphosphate biosynthesis; dimethylallyl diphosphate from (2E)-4-hydroxy-3-methylbutenyl diphosphate: step 1/1. It functions in the pathway isoprenoid biosynthesis; isopentenyl diphosphate biosynthesis via DXP pathway; isopentenyl diphosphate from 1-deoxy-D-xylulose 5-phosphate: step 6/6. In terms of biological role, catalyzes the conversion of 1-hydroxy-2-methyl-2-(E)-butenyl 4-diphosphate (HMBPP) into a mixture of isopentenyl diphosphate (IPP) and dimethylallyl diphosphate (DMAPP). Acts in the terminal step of the DOXP/MEP pathway for isoprenoid precursor biosynthesis. This Exiguobacterium sp. (strain ATCC BAA-1283 / AT1b) protein is 4-hydroxy-3-methylbut-2-enyl diphosphate reductase.